Here is a 271-residue protein sequence, read N- to C-terminus: Ribosomal RNA small subunit methyltransferase A (271 aa).

S-adenosyl-L-methionine is bound by residues Leu20, Gly45, Glu66, Asp90, and Asn112.

This sequence belongs to the class I-like SAM-binding methyltransferase superfamily. rRNA adenine N(6)-methyltransferase family. RsmA subfamily.

It is found in the cytoplasm. The enzyme catalyses adenosine(1518)/adenosine(1519) in 16S rRNA + 4 S-adenosyl-L-methionine = N(6)-dimethyladenosine(1518)/N(6)-dimethyladenosine(1519) in 16S rRNA + 4 S-adenosyl-L-homocysteine + 4 H(+). In terms of biological role, specifically dimethylates two adjacent adenosines (A1518 and A1519) in the loop of a conserved hairpin near the 3'-end of 16S rRNA in the 30S particle. May play a critical role in biogenesis of 30S subunits. This chain is Ribosomal RNA small subunit methyltransferase A, found in Blochmanniella floridana.